A 1289-amino-acid polypeptide reads, in one-letter code: uncharacterized protein (1289 aa).

Positions 615–733 (LDMYDVLKEL…DGMLSYSAQL (119 aa)) constitute an MHD1 domain. The interval 745 to 774 (DEPSYSLESSDTRSSLSLNNANVNHEKSRS) is disordered. Over residues 748–762 (SYSLESSDTRSSLSL) the composition is skewed to low complexity. Residues 834-966 (AQYHSSHNLE…DDGFPIDFSL (133 aa)) enclose the C2 domain. In terms of domain architecture, MHD2 spans 1044-1184 (YDAILPLFDY…KSVSELKDEV (141 aa)).

The protein resides in the cytoplasm. This is an uncharacterized protein from Saccharomyces cerevisiae (strain ATCC 204508 / S288c) (Baker's yeast).